Consider the following 569-residue polypeptide: Proline--tRNA ligase (569 aa).

Belongs to the class-II aminoacyl-tRNA synthetase family. ProS type 1 subfamily. As to quaternary structure, homodimer.

It localises to the cytoplasm. The catalysed reaction is tRNA(Pro) + L-proline + ATP = L-prolyl-tRNA(Pro) + AMP + diphosphate. Functionally, catalyzes the attachment of proline to tRNA(Pro) in a two-step reaction: proline is first activated by ATP to form Pro-AMP and then transferred to the acceptor end of tRNA(Pro). As ProRS can inadvertently accommodate and process non-cognate amino acids such as alanine and cysteine, to avoid such errors it has two additional distinct editing activities against alanine. One activity is designated as 'pretransfer' editing and involves the tRNA(Pro)-independent hydrolysis of activated Ala-AMP. The other activity is designated 'posttransfer' editing and involves deacylation of mischarged Ala-tRNA(Pro). The misacylated Cys-tRNA(Pro) is not edited by ProRS. This chain is Proline--tRNA ligase, found in Latilactobacillus sakei subsp. sakei (strain 23K) (Lactobacillus sakei subsp. sakei).